Here is a 234-residue protein sequence, read N- to C-terminus: MAKLTKRMRVIRDKVEVTKEYEINEAVALLKELATAKFVESVDVAVNLGIDARKSDQNVRGATVLPHGTGRDIRVAVFTQGANAEAAKAAGADIVGMEDLAEQVKKGEMNFDVVVASPDAMRVVGQLGTILGPRGLMPNPKVGTVTPNVAEAVKNAKAGQVRYRNDKNGIIHTTIGKASFEANQLQENLEALLVALKKAKPSSAKGTFLKKVSISTTMGAGVTVDQASLDTQAN.

Belongs to the universal ribosomal protein uL1 family. In terms of assembly, part of the 50S ribosomal subunit.

In terms of biological role, binds directly to 23S rRNA. The L1 stalk is quite mobile in the ribosome, and is involved in E site tRNA release. Functionally, protein L1 is also a translational repressor protein, it controls the translation of the L11 operon by binding to its mRNA. The sequence is that of Large ribosomal subunit protein uL1 from Vibrio atlanticus (strain LGP32) (Vibrio splendidus (strain Mel32)).